Reading from the N-terminus, the 150-residue chain is Peptide deformylase (150 aa).

Cys88 and His130 together coordinate Fe cation. The active site involves Glu131. His134 contributes to the Fe cation binding site.

Belongs to the polypeptide deformylase family. Fe(2+) is required as a cofactor.

The catalysed reaction is N-terminal N-formyl-L-methionyl-[peptide] + H2O = N-terminal L-methionyl-[peptide] + formate. Its function is as follows. Removes the formyl group from the N-terminal Met of newly synthesized proteins. Requires at least a dipeptide for an efficient rate of reaction. N-terminal L-methionine is a prerequisite for activity but the enzyme has broad specificity at other positions. This is Peptide deformylase from Desulfitobacterium hafniense (strain DSM 10664 / DCB-2).